A 248-amino-acid chain; its full sequence is tRNA (guanine-N(1)-)-methyltransferase (248 aa).

Residues Gly113 and 133–138 (IGDYVL) contribute to the S-adenosyl-L-methionine site. The segment at 226–248 (ARPAQTIRAKGESQKTPKNKTDG) is disordered. Positions 234 to 248 (AKGESQKTPKNKTDG) are enriched in basic and acidic residues.

It belongs to the RNA methyltransferase TrmD family. Homodimer.

Its subcellular location is the cytoplasm. The enzyme catalyses guanosine(37) in tRNA + S-adenosyl-L-methionine = N(1)-methylguanosine(37) in tRNA + S-adenosyl-L-homocysteine + H(+). Specifically methylates guanosine-37 in various tRNAs. The chain is tRNA (guanine-N(1)-)-methyltransferase from Rhodopseudomonas palustris (strain ATCC BAA-98 / CGA009).